The chain runs to 206 residues: Large ribosomal subunit protein eL13z (206 aa).

The interval Glu-183–Lys-206 is disordered. Over residues Asn-186–Lys-195 the composition is skewed to basic residues. Basic and acidic residues predominate over residues Arg-196 to Lys-206.

It belongs to the eukaryotic ribosomal protein eL13 family.

The protein is Large ribosomal subunit protein eL13z of Brassica napus (Rape).